Here is a 385-residue protein sequence, read N- to C-terminus: GTPase Obg (385 aa).

In terms of domain architecture, Obg spans 1-159 (MKFVDEVEIR…RNLKLELLLL (159 aa)). One can recognise an OBG-type G domain in the interval 160-333 (ADVGLLGLPN…LIHDVMTLLE (174 aa)). GTP-binding positions include 166-173 (GLPNAGKS), 191-195 (FTTLI), 213-216 (DIPG), 283-286 (NKID), and 314-316 (SAI). Mg(2+)-binding residues include serine 173 and threonine 193.

This sequence belongs to the TRAFAC class OBG-HflX-like GTPase superfamily. OBG GTPase family. In terms of assembly, monomer. It depends on Mg(2+) as a cofactor.

The protein resides in the cytoplasm. Functionally, an essential GTPase which binds GTP, GDP and possibly (p)ppGpp with moderate affinity, with high nucleotide exchange rates and a fairly low GTP hydrolysis rate. Plays a role in control of the cell cycle, stress response, ribosome biogenesis and in those bacteria that undergo differentiation, in morphogenesis control. The chain is GTPase Obg from Pseudoalteromonas translucida (strain TAC 125).